Consider the following 331-residue polypeptide: DNA-directed RNA polymerase subunit alpha (331 aa).

An alpha N-terminal domain (alpha-NTD) region spans residues 1 to 230 (MKNIKTSPYI…KQMSVFNSEW (230 aa)). Residues 247–331 (LKPLLQKIEA…ALQKRLNKLK (85 aa)) are alpha C-terminal domain (alpha-CTD).

This sequence belongs to the RNA polymerase alpha chain family. As to quaternary structure, homodimer. The RNAP catalytic core consists of 2 alpha, 1 beta/beta' and 1 omega subunit. When a sigma factor is associated with the core the holoenzyme is formed, which can initiate transcription.

It catalyses the reaction RNA(n) + a ribonucleoside 5'-triphosphate = RNA(n+1) + diphosphate. Its function is as follows. DNA-dependent RNA polymerase catalyzes the transcription of DNA into RNA using the four ribonucleoside triphosphates as substrates. This Wolinella succinogenes (strain ATCC 29543 / DSM 1740 / CCUG 13145 / JCM 31913 / LMG 7466 / NCTC 11488 / FDC 602W) (Vibrio succinogenes) protein is DNA-directed RNA polymerase subunit alpha.